A 520-amino-acid polypeptide reads, in one-letter code: MASYKPVVIPAVPKLGEKITQDTLYWRGYKTPVQIKEFGAINKIDFSPVPPYNYAVTASSRVHIYGRYSQEPIKTFSRFKDAAYCATYRDDGKLLVAGSEEGSIRLFDISGRAPLRQFDGHTKAVHVVGFLSDKYRIFSGGDDYSSSLWDIPSATEIVSYSEHSDYVRCGCASKLNGDVFITGSYDHTVKVFDARTKSSVMTIEHGHPVESVLLFPSGGLLVSAGGRYVKVWDVLKGGQLLVSLKNHHKTVTCLCLNSSGQRLLSGSLDRHVKIYSTTSYKVVHSFNYATSILSLALSPEDETIIVGMTNGVLNVKHRKPEESKEKSQKKRQPAYRTYVKGRNYMPKQEDFFVSKPGRCIMRKYDKLLKSFQSSKALDAVLEPHIRLYTPEVTVAVMQELNRRGTLRSALAGRDEKQISLLLTFVTRRVIEPRFTPVLITVADMITDIYQPVVGQSALVDKQFLRLQEAIGREIDYQEELLEVLGMMDALFATLTEKRATYLEENKSNGLTKTLDQDISI.

WD repeat units follow at residues Lys36–Thr75, Arg78–Gln117, Gly120–Ser159, Glu162–Thr202, Glu204–Val242, Asn246–Ser285, and Asn287–Lys326.

In terms of assembly, part of the small subunit (SSU) processome, composed of more than 70 proteins and the RNA chaperone small nucleolar RNA (snoRNA) U3. May be a component of the proposed t-UTP subcomplex of the ribosomal small subunit (SSU) processome.

It is found in the nucleus. The protein localises to the nucleolus. Functionally, ribosome biogenesis factor. Involved in nucleolar processing of pre-18S ribosomal RNA. Required for optimal pre-ribosomal RNA transcription by RNA polymerase I. Part of the small subunit (SSU) processome, first precursor of the small eukaryotic ribosomal subunit. During the assembly of the SSU processome in the nucleolus, many ribosome biogenesis factors, an RNA chaperone and ribosomal proteins associate with the nascent pre-rRNA and work in concert to generate RNA folding, modifications, rearrangements and cleavage as well as targeted degradation of pre-ribosomal RNA by the RNA exosome. This Gallus gallus (Chicken) protein is U3 small nucleolar RNA-associated protein 15 homolog (UTP15).